We begin with the raw amino-acid sequence, 56 residues long: Large ribosomal subunit protein bL32 (56 aa).

The segment at 1–39 (MAVQQNKKSRSKRGMRRSHDSLSTAQLSVDATSGELHRR) is disordered. Residues 7 to 16 (KKSRSKRGMR) show a composition bias toward basic residues. The segment covering 21 to 31 (SLSTAQLSVDA) has biased composition (polar residues).

Belongs to the bacterial ribosomal protein bL32 family.

The polypeptide is Large ribosomal subunit protein bL32 (Shewanella piezotolerans (strain WP3 / JCM 13877)).